The chain runs to 293 residues: Probable metal transport system membrane protein CT_417 (293 aa).

7 consecutive transmembrane segments (helical) span residues 18-38 (SLLAAFGASIAAGIIGSYIVV), 41-61 (IVSISGSIAHSILGGVGIALW), 68-88 (LPISPLHGAIASAIFVAICIG), 101-121 (IISMIWSIGMAIGIICISKLP), 135-155 (ILWVTPQDLYFLGILDLFIVA), 187-207 (LLLILTAITTVVLMYVMGVIL), and 242-262 (FLGIMLAYLLDLPVGPVIAIL).

The protein belongs to the ABC-3 integral membrane protein family.

Its subcellular location is the cell inner membrane. Part of an ATP-driven transport system CT_415/CT_416/CT_417 for a metal. This is Probable metal transport system membrane protein CT_417 from Chlamydia trachomatis serovar D (strain ATCC VR-885 / DSM 19411 / UW-3/Cx).